Here is a 253-residue protein sequence, read N- to C-terminus: tRNA pseudouridine synthase A (253 aa).

The Nucleophile role is filled by Asp52. Tyr110 lines the substrate pocket.

Belongs to the tRNA pseudouridine synthase TruA family. As to quaternary structure, homodimer.

It carries out the reaction uridine(38/39/40) in tRNA = pseudouridine(38/39/40) in tRNA. In terms of biological role, formation of pseudouridine at positions 38, 39 and 40 in the anticodon stem and loop of transfer RNAs. This is tRNA pseudouridine synthase A from Thermus thermophilus (strain ATCC BAA-163 / DSM 7039 / HB27).